A 426-amino-acid polypeptide reads, in one-letter code: MEKFRVHGPYKLSGTVDISGAKNAALPILFATILAEEPISLTNVPDLKDVDTTFKILRKLGVVIERDANGVVQIDASHIQHYVAPYELVKTMRASIWALAPLVARFHQGQVSLPGGCTIGARPVDMHITSLEKMGAIIELDEGYVKATANGRLQGARIYMDKVSVGATLSVMMAATLAEGSTIIENAAREPEIVDTAHFLNAMGAEISGAGTDTITIKGKERLTGCQHHIVADRIETGTFLVAAAISGGKITCQGTKADTLDAVIEKLREAGMEVTVTENSITLDTKGQRPKAVNIRTMPHPGFPTDMQAQFTLLNAVAEGTSRITETIFENRFMHIPELNRMGAKAEIEGNTAICQGVEQLKPAEVMATDLRASISLVLAGCIASGETIVDRIYHIDRGYEHIEEKLRRIGAKIERFRESASSAE.

22–23 (KN) provides a ligand contact to phosphoenolpyruvate. Arginine 93 is a binding site for UDP-N-acetyl-alpha-D-glucosamine. Cysteine 117 (proton donor) is an active-site residue. The residue at position 117 (cysteine 117) is a 2-(S-cysteinyl)pyruvic acid O-phosphothioketal. Residues 162-165 (KVSV), aspartate 307, and isoleucine 329 each bind UDP-N-acetyl-alpha-D-glucosamine.

This sequence belongs to the EPSP synthase family. MurA subfamily.

It is found in the cytoplasm. The enzyme catalyses phosphoenolpyruvate + UDP-N-acetyl-alpha-D-glucosamine = UDP-N-acetyl-3-O-(1-carboxyvinyl)-alpha-D-glucosamine + phosphate. It functions in the pathway cell wall biogenesis; peptidoglycan biosynthesis. Functionally, cell wall formation. Adds enolpyruvyl to UDP-N-acetylglucosamine. In Haemophilus ducreyi (strain 35000HP / ATCC 700724), this protein is UDP-N-acetylglucosamine 1-carboxyvinyltransferase.